The chain runs to 393 residues: Ribonucleoside-diphosphate reductase subunit M2 (393 aa).

The residue at position 18 (Ser18) is a Phosphoserine. Residues Asp142, Glu173, and His176 each coordinate Fe cation. Tyr180 is a catalytic residue. Fe cation contacts are provided by Glu236, Glu270, and His273.

It belongs to the ribonucleoside diphosphate reductase small chain family. Heterodimer of a large and a small subunit. Fe cation serves as cofactor.

It localises to the cytoplasm. The enzyme catalyses a 2'-deoxyribonucleoside 5'-diphosphate + [thioredoxin]-disulfide + H2O = a ribonucleoside 5'-diphosphate + [thioredoxin]-dithiol. In terms of biological role, provides the precursors necessary for DNA synthesis. Catalyzes the biosynthesis of deoxyribonucleotides from the corresponding ribonucleotides. This is Ribonucleoside-diphosphate reductase subunit M2 (RnrS) from Drosophila melanogaster (Fruit fly).